Here is a 258-residue protein sequence, read N- to C-terminus: Imidazole glycerol phosphate synthase subunit HisF (258 aa).

Catalysis depends on residues Asp11 and Asp130.

Belongs to the HisA/HisF family. In terms of assembly, heterodimer of HisH and HisF.

The protein resides in the cytoplasm. The enzyme catalyses 5-[(5-phospho-1-deoxy-D-ribulos-1-ylimino)methylamino]-1-(5-phospho-beta-D-ribosyl)imidazole-4-carboxamide + L-glutamine = D-erythro-1-(imidazol-4-yl)glycerol 3-phosphate + 5-amino-1-(5-phospho-beta-D-ribosyl)imidazole-4-carboxamide + L-glutamate + H(+). Its pathway is amino-acid biosynthesis; L-histidine biosynthesis; L-histidine from 5-phospho-alpha-D-ribose 1-diphosphate: step 5/9. IGPS catalyzes the conversion of PRFAR and glutamine to IGP, AICAR and glutamate. The HisF subunit catalyzes the cyclization activity that produces IGP and AICAR from PRFAR using the ammonia provided by the HisH subunit. This chain is Imidazole glycerol phosphate synthase subunit HisF, found in Salmonella agona (strain SL483).